The primary structure comprises 117 residues: Large ribosomal subunit protein uL18 (117 aa).

The protein belongs to the universal ribosomal protein uL18 family. Part of the 50S ribosomal subunit; part of the 5S rRNA/L5/L18/L25 subcomplex. Contacts the 5S and 23S rRNAs.

This is one of the proteins that bind and probably mediate the attachment of the 5S RNA into the large ribosomal subunit, where it forms part of the central protuberance. The sequence is that of Large ribosomal subunit protein uL18 from Methylococcus capsulatus (strain ATCC 33009 / NCIMB 11132 / Bath).